Here is a 405-residue protein sequence, read N- to C-terminus: Tyrosine--tRNA ligase (405 aa).

Residue tyrosine 35 coordinates L-tyrosine. Positions alanine 40–histidine 49 match the 'HIGH' region motif. Residues tyrosine 166 and glutamine 170 each coordinate L-tyrosine. The 'KMSKS' region motif lies at lysine 226–serine 230. An ATP-binding site is contributed by lysine 229. The S4 RNA-binding domain occupies isoleucine 340 to isoleucine 405.

The protein belongs to the class-I aminoacyl-tRNA synthetase family. TyrS type 1 subfamily. In terms of assembly, homodimer.

The protein resides in the cytoplasm. It carries out the reaction tRNA(Tyr) + L-tyrosine + ATP = L-tyrosyl-tRNA(Tyr) + AMP + diphosphate + H(+). Catalyzes the attachment of tyrosine to tRNA(Tyr) in a two-step reaction: tyrosine is first activated by ATP to form Tyr-AMP and then transferred to the acceptor end of tRNA(Tyr). This is Tyrosine--tRNA ligase from Borreliella burgdorferi (strain ATCC 35210 / DSM 4680 / CIP 102532 / B31) (Borrelia burgdorferi).